The chain runs to 462 residues: MAQVSINNDYSEWDLSTDAGERARLLQSPCVDTAPKSEWEASPGGLDRGTTSTLGAIFIVVNACLGAGLLNFPAAFSTAGGVAAGIALQMGMLVFIISGLVILAYCSQASNERTYQEVVWAVCGKLTGVLCEVAIAVYTFGTCIAFLIIIGDQQDKIIAVMAKEPEGASGPWYTDRKFTISLTAFLFILPLSIPREIGFQKYASFLSVVGTWYVTAIVIIKYIWPDKEMTPGNILTRPASWMAVFNAMPTICFGFQCHVSSVPVFNSMQQPEVKTWGGVVTAAMVIALAVYMGTGICGFLTFGAAVDPDVLLSYPSEDMAVAVARAFIILSVLTSYPILHFCGRAVVEGLWLRYQGVPVEEDVGRERRRRVLQTLVWFLLTLLLALFIPDIGKVISVIGGLAACFIFVFPGLCLIQAKLSEMEEVKPASWWVLVSYGVLLVTLGAFIFGQTTANAIFVDLLA.

Phosphoserine is present on Ser28. Helical transmembrane passes span 56-76, 82-102, 130-150, 178-198, 205-225, 239-259, 282-302, 319-339, 371-391, 395-415, and 428-448; these read AIFI…PAAF, VAAG…GLVI, LCEV…LIII, FTIS…REIG, FLSV…YIWP, ASWM…QCHV, AAMV…FLTF, MAVA…YPIL, VLQT…IPDI, ISVI…LCLI, and ASWW…AFIF.

The protein belongs to the amino acid/polyamine transporter 2 family. As to quaternary structure, interacts with the mTORC1 complex; this interaction mediates the recruitment of mTORC1 to the lysosome and its subsequent activation.

Its subcellular location is the lysosome membrane. It is found in the cell projection. The protein resides in the axon. The catalysed reaction is L-asparagine(in) + Na(+)(in) = L-asparagine(out) + Na(+)(out). It carries out the reaction L-glutamine(in) + Na(+)(in) = L-glutamine(out) + Na(+)(out). Its function is as follows. Symporter that selectively cotransports sodium ions and amino acids, such as L-glutamine and L-asparagine from the lysosome into the cytoplasm and may participates in mTORC1 activation. The transport activity requires an acidic lysosomal lumen. This chain is Sodium-coupled neutral amino acid transporter 7, found in Homo sapiens (Human).